The sequence spans 147 residues: UPF0306 protein YhbP (147 aa).

It belongs to the UPF0306 family.

This is UPF0306 protein YhbP from Escherichia coli (strain K12 / MC4100 / BW2952).